A 238-amino-acid polypeptide reads, in one-letter code: Ribonuclease HII (238 aa).

Residues 12–197 (GIVAGVDEAG…VLELLTDDLL (186 aa)) enclose the RNase H type-2 domain. Residues Asp18, Glu19, and Asp107 each coordinate a divalent metal cation.

It belongs to the RNase HII family. It depends on Mn(2+) as a cofactor. The cofactor is Mg(2+).

Its subcellular location is the cytoplasm. It carries out the reaction Endonucleolytic cleavage to 5'-phosphomonoester.. Its function is as follows. Endonuclease that specifically degrades the RNA of RNA-DNA hybrids. The protein is Ribonuclease HII of Thermotoga petrophila (strain ATCC BAA-488 / DSM 13995 / JCM 10881 / RKU-1).